The following is a 280-amino-acid chain: Pyrethroid hydrolase (280 aa).

Residues D202 and H230 each act as charge relay system in the active site. Residues Y254–P280 form a disordered region.

This sequence belongs to the AB hydrolase superfamily. As to quaternary structure, monomer.

It catalyses the reaction (-)-trans-permethrin + H2O = (3-phenoxyphenyl)methanol + (1S,3R)-3-(2,2-dichlorovinyl)-2,2-dimethylcyclopropanecarboxylate + H(+). In terms of biological role, catalyzes the hydrolysis of pyrethroids pesticides. Catalyzes the hydrolysis of cypermethrin to equimolar amounts of cyano-3-phenoxybenzyl alcohol and 2,2-dimethyl-3-(2,2-dichlorovinyl)-cyclopropanecarboxylic acid. Hydrolyzes cis-permethrin at approximately equal rate to trans-permethrin. In Sphingobium wenxiniae (strain DSM 21828 / CGMCC 1.7748 / JZ-1), this protein is Pyrethroid hydrolase (pytH).